We begin with the raw amino-acid sequence, 311 residues long: Bifunctional pinoresinol-lariciresinol reductase (311 aa).

Residues 10–16, Arg-35, and Lys-44 each bind NADP(+); that span reads GGTGYLG. Residue Lys-138 is the Proton acceptor of the active site. NADP(+) is bound at residue Arg-142. His-270 is a binding site for substrate.

It belongs to the NmrA-type oxidoreductase family. Isoflavone reductase subfamily. As to quaternary structure, dimer. Expressed in rhizomes, stems, and leaves.

The catalysed reaction is (-)-secoisolariciresinol + NADP(+) = (+)-lariciresinol + NADPH + H(+). It catalyses the reaction (+)-lariciresinol + NADP(+) = (+)-pinoresinol + NADPH + H(+). The protein operates within aromatic compound metabolism; phenylpropanoid biosynthesis. Functionally, reductase involved in lignan biosynthesis. Also involved in the biosynthesis of etoposide, a chemotherapeutic compound of the topoisomerase inhibitor family. Catalyzes the enantioselective sequential conversion of (+)-pinoresinol into (+)-lariciresinol and of (+)-lariciresinol into (-)-secoisolariciresinol. Abstracts the 4R-hydride from the NADPH cofactor during catalysis. The protein is Bifunctional pinoresinol-lariciresinol reductase of Sinopodophyllum hexandrum (Himalayan may apple).